A 248-amino-acid chain; its full sequence is Neurovirulence factor ICP34.5 (248 aa).

Positions 1 to 14 are enriched in basic residues; sequence MARRRRHRGPRRPR. Residues 1–16 are required for nucleolar localization; that stretch reads MARRRRHRGPRRPRPP. 2 disordered regions span residues 1–129 and 149–174; these read MARR…FRLP and RRAGGEGAPEPPATPATPATPATPAT. A compositionally biased stretch (polar residues) spans 24-35; the sequence is TAQSQVTSTPNS. The segment covering 45–58 has biased composition (pro residues); that stretch reads AAPPPPPAGGPPPS. Residues 73–83 are compositionally biased toward acidic residues; the sequence is ASDDDDDDDWP. 2 stretches are compositionally biased toward pro residues: residues 84 to 93 and 119 to 128; these read DSPPPEPAPE and SHPPSRPFRL. Positions 128 to 137 match the Nuclear export signal motif; that stretch reads LPPRLALRLR. 5 repeat units span residues 161–163, 164–166, 167–169, 170–172, and 173–175. Residues 161–175 are 5 X 3 AA tandem repeats of A-T-P; sequence ATPATPATPATPATP. Over residues 164-174 the composition is skewed to low complexity; the sequence is ATPATPATPAT. Residues 175–188 form a binding to PP1CA region; it reads PARVRFSPHVRVRH. The tract at residues 175 to 188 is interaction with host PPP1CA; the sequence is PARVRFSPHVRVRH. Residues 190–248 form an important for interferon resistance region; that stretch reads VVWASAARLARRGSWARERADRARFRRRVAEAEAVIGPCLGPEARARALARGAGPANSV. The short motif at 200–218 is the Bipartite nuclear localization signal element; it reads RRGSWARERADRARFRRRV. The interval 218–233 is interaction with host EIF2S1/EIF-2ALPHA; that stretch reads VAEAEAVIGPCLGPEA.

The protein belongs to the PPP1R15 family. As to quaternary structure, interacts with host PPP1CA; this interaction forms a high-molecular-weight complex that dephosphorylates EIF2S1/eIF-2alpha. Interacts with host EIF2S1/eIF-2alpha; this interaction is crucial for the specific dephosphorylation of EIF2S1/eIF-2alpha by PPP1CA. Binds to proliferating cell nuclear antigen (PCNA), which may release host cells from growth arrest and facilitate viral replication. Interacts (via N-terminus) with host C1QBP; this interaction allows C1QBP to be recruited to the inner nuclear membrane by ICP34.5. Interacts with host PRKCA. Interacts with protein UL31. Interacts with host STING/TMEM173; this interaction inhibits the intracellular DNA sensing pathway. Interacts with host BECN1; this interaction modulates host autophagy.

It is found in the host cytoplasm. Its subcellular location is the host nucleus. The protein localises to the host nucleolus. It localises to the virion. Inhibits the establishment of the immune response and of the integrated stress response (ISR) in the infected cell. Plays essential roles in viral nuclear egress to mediate capsid transit across the nuclear membrane. Facilitates nuclear egress cooperatively with host C1QBP and protein kinase C/PKC to induce lamin A/C phosphorylation and subsequent reorganization. In turn, lamina disassembles and nuclear egress occurs. Recruits the serine/threonine protein phosphatase PPP1CA/PP1-alpha to dephosphorylate the translation initiation factor EIF2S1/eIF-2alpha, thereby couteracting the host shutoff of protein synthesis involving double-stranded RNA-dependent protein kinase EIF2AK2/PKR. In turn, controls host IRF3 activation and subsequently inhibits host interferon response. Controls the DNA sensing pathway by interacting with and inhibiting host STING/TMEM173. Also down-modulates the host MHC class II proteins cell surface expression. Acts as a neurovirulence factor that has a profound effect on the growth of the virus in central nervous system tissue, by interacting with host BECN1 and thereby antagonizing the host autophagy response. The sequence is that of Neurovirulence factor ICP34.5 (ICP34.5) from Homo sapiens (Human).